Here is a 222-residue protein sequence, read N- to C-terminus: Adenylate kinase, chloroplastic (222 aa).

15 to 20 (ASGKGT) provides a ligand contact to ATP. The NMP stretch occupies residues 35-64 (SAGDLLRAEIAAGSENGKRAKEFMEKGQLV). AMP contacts are provided by residues R41, 62 to 64 (QLV), 91 to 94 (GYPR), and Q98. Residues 128–161 (GRRLDPVTGKIYHLKYSPPENEEIASRLTQRFDD) form an LID region. ATP is bound at residue R129. R158 contacts AMP. ATP is bound at residue A195.

In terms of assembly, monomer.

The protein localises to the plastid. It is found in the chloroplast. The enzyme catalyses AMP + ATP = 2 ADP. Catalyzes the reversible transfer of the terminal phosphate group between ATP and AMP. Plays an important role in cellular energy homeostasis and in adenine nucleotide metabolism. The maize enzyme also works with CMP, albeit with 10% of the activity with AMP. This Zea mays (Maize) protein is Adenylate kinase, chloroplastic (ADK1).